Reading from the N-terminus, the 500-residue chain is Protein nucleotidyltransferase YdiU (500 aa).

G96, G98, R99, K119, D131, G132, R182, and R189 together coordinate ATP. Catalysis depends on D258, which acts as the Proton acceptor. 2 residues coordinate Mg(2+): N259 and D268. D268 provides a ligand contact to ATP.

The protein belongs to the SELO family. Mg(2+) is required as a cofactor. It depends on Mn(2+) as a cofactor.

It catalyses the reaction L-seryl-[protein] + ATP = 3-O-(5'-adenylyl)-L-seryl-[protein] + diphosphate. The catalysed reaction is L-threonyl-[protein] + ATP = 3-O-(5'-adenylyl)-L-threonyl-[protein] + diphosphate. The enzyme catalyses L-tyrosyl-[protein] + ATP = O-(5'-adenylyl)-L-tyrosyl-[protein] + diphosphate. It carries out the reaction L-histidyl-[protein] + UTP = N(tele)-(5'-uridylyl)-L-histidyl-[protein] + diphosphate. It catalyses the reaction L-seryl-[protein] + UTP = O-(5'-uridylyl)-L-seryl-[protein] + diphosphate. The catalysed reaction is L-tyrosyl-[protein] + UTP = O-(5'-uridylyl)-L-tyrosyl-[protein] + diphosphate. Nucleotidyltransferase involved in the post-translational modification of proteins. It can catalyze the addition of adenosine monophosphate (AMP) or uridine monophosphate (UMP) to a protein, resulting in modifications known as AMPylation and UMPylation. The protein is Protein nucleotidyltransferase YdiU of Rhizobium etli (strain CIAT 652).